Here is a 213-residue protein sequence, read N- to C-terminus: NADH-quinone oxidoreductase subunit B 1 (213 aa).

[4Fe-4S] cluster-binding residues include C82, C83, C148, and C177.

This sequence belongs to the complex I 20 kDa subunit family. In terms of assembly, NDH-1 is composed of 14 different subunits. Subunits NuoB, C, D, E, F, and G constitute the peripheral sector of the complex. Requires [4Fe-4S] cluster as cofactor.

The protein resides in the cell inner membrane. The enzyme catalyses a quinone + NADH + 5 H(+)(in) = a quinol + NAD(+) + 4 H(+)(out). Its function is as follows. NDH-1 shuttles electrons from NADH, via FMN and iron-sulfur (Fe-S) centers, to quinones in the respiratory chain. The immediate electron acceptor for the enzyme in this species is believed to be ubiquinone. Couples the redox reaction to proton translocation (for every two electrons transferred, four hydrogen ions are translocated across the cytoplasmic membrane), and thus conserves the redox energy in a proton gradient. The chain is NADH-quinone oxidoreductase subunit B 1 from Koribacter versatilis (strain Ellin345).